The sequence spans 209 residues: Uracil phosphoribosyltransferase (209 aa).

5-phospho-alpha-D-ribose 1-diphosphate contacts are provided by residues Arg-79, Arg-104, and 131–139 (DPMLATGGS). Uracil contacts are provided by residues Ile-194 and 199-201 (GDA). Residue Asp-200 participates in 5-phospho-alpha-D-ribose 1-diphosphate binding.

This sequence belongs to the UPRTase family. Requires Mg(2+) as cofactor.

The enzyme catalyses UMP + diphosphate = 5-phospho-alpha-D-ribose 1-diphosphate + uracil. It functions in the pathway pyrimidine metabolism; UMP biosynthesis via salvage pathway; UMP from uracil: step 1/1. Allosterically activated by GTP. Its function is as follows. Catalyzes the conversion of uracil and 5-phospho-alpha-D-ribose 1-diphosphate (PRPP) to UMP and diphosphate. The protein is Uracil phosphoribosyltransferase of Lactobacillus delbrueckii subsp. bulgaricus (strain ATCC 11842 / DSM 20081 / BCRC 10696 / JCM 1002 / NBRC 13953 / NCIMB 11778 / NCTC 12712 / WDCM 00102 / Lb 14).